Here is a 930-residue protein sequence, read N- to C-terminus: MKIPLHKLLISSTLVTPILLSIATYGADASLSPTDSFDGAGGSTFTPKSTADANGTNYVLSGNVYINDAGKGTALTGCCFTETTGDLTFTGKGYSFSFNTVDAGSNAGAAASTTADKALTFTGFSNLSFIAAPGTTVASGKSTLSSAGALNLTDNGTILFSQNVSNEANNNGGAITTKTLSISGNTSSITFTSNSAKKLGGAIYSSAAASISGNTGQLVFMNNKGETGGGALGFEASSSITQNSSLFFSGNTATDAAGKGGAIYCEKTGETPTLTISGNKSLTFAENSSVTQGGAICAHGLDLSAAGPTLFSNNRCGNTAAGKGGAIAIADSGSLSLSANQGDITFLGNTLTSTSAPTSTRNAIYLGSSAKITNLRAAQGQSIYFYDPIASNTTGASDVLTINQPDSNSPLDYSGTIVFSGEKLSADEAKAADNFTSILKQPLALASGTLALKGNVELDVNGFTQTEGSTLLMQPGTKLKADTEAISLTKLVVDLSALEGNKSVSIETAGANKTITLTSPLVFQDSSGNFYESHTINQAFTQPLVVFTAATAASDIYIDALLTSPVQTPEPHYGYQGHWEATWADTSTAKSGTMTWVTTGYNPNPERRASVVPDSLWASFTDIRTLQQIMTSQANSIYQQRGLWASGTANFFHKDKSGTNQAFRHKSYGYIVGGSAEDFSENIFSVAFCQLFGKDKDLFIVENTSHNYLASLYLQHRAFLGGLPMPSFGSITDMLKDIPLILNAQLSYSYTKNDMDTRYTSYPEAQGSWTNNSGALELGGSLALYLPKEAPFFQGYFPFLKFQAVYSRQQNFKESGAEARAFDDGDLVNCSIPVGIRLEKISEDEKNNFEISLAYIGDVYRKNPRSRTSLMVSGASWTSLCKNLARQAFLASAGSHLTLSPHVELSGEAAYELRGSAHIYNVDCGLRYSF.

A signal peptide spans 1-26 (MKIPLHKLLISSTLVTPILLSIATYG). Residues 636–930 (SIYQQRGLWA…NVDCGLRYSF (295 aa)) enclose the Autotransporter domain.

The protein belongs to the PMP outer membrane protein family.

It localises to the secreted. The protein localises to the cell wall. The protein resides in the cell outer membrane. The polypeptide is Probable outer membrane protein pmp8 (pmp8) (Chlamydia pneumoniae (Chlamydophila pneumoniae)).